We begin with the raw amino-acid sequence, 207 residues long: Protein GET1 (207 aa).

Residues Met-1–Leu-4 are Lumenal-facing. Residues Leu-5–Ser-24 traverse the membrane as a helical segment. Over Thr-25–Arg-110 the chain is Cytoplasmic. Residues Met-44–Arg-97 adopt a coiled-coil conformation. The helical transmembrane segment at Trp-111–Phe-131 threads the bilayer. At Thr-132–Thr-155 the chain is on the lumenal side. Residues Val-156–Val-172 traverse the membrane as a helical segment. Topologically, residues Gly-173–Gln-207 are cytoplasmic.

Belongs to the WRB/GET1 family. As to quaternary structure, interacts with GET3.

The protein resides in the endoplasmic reticulum membrane. Functionally, required for the post-translational delivery of tail-anchored (TA) proteins to the endoplasmic reticulum. Acts as a membrane receptor for soluble GET3, which recognizes and selectively binds the transmembrane domain of TA proteins in the cytosol. This is Protein GET1 from Paracoccidioides lutzii (strain ATCC MYA-826 / Pb01) (Paracoccidioides brasiliensis).